The chain runs to 556 residues: Man(5)GlcNAc(2)-PP-dolichol translocation protein RFT1 (556 aa).

Transmembrane regions (helical) follow at residues 10 to 30 (LLGAGFSIIFQILCRILTFGI), 41 to 61 (EVLGIMNVRLLLLESTLLFLS), 91 to 111 (LTVPICAVLCAPCLYIWLNWL), 129 to 149 (VAFSCVLELMAESAVFVAQVF), 156 to 176 (ILLNTLHILVRSAIFLWIVTG), 184 to 204 (AFAIAQLSSAVTIVLGQYGFF), 353 to 373 (SVLNNLLLGVSSIGLIAFTFG), 389 to 409 (FVAGGLPQSLLQWHCLAIYLL), 440 to 460 (VSFLVLSYILTGIFGPVGFIF), 461 to 477 (ANCINMLSRILYSTYYI), 489 to 509 (LLGLWPGKLFGCTLFLAGIVC), and 517 to 537 (LATHLGVGVLAGLACLLSWAL).

Belongs to the RFT1 family.

The protein resides in the endoplasmic reticulum membrane. It participates in protein modification; protein glycosylation. Functionally, intramembrane glycolipid transporter that operates in the biosynthetic pathway of dolichol-linked oligosaccharides, the glycan precursors employed in protein asparagine (N)-glycosylation. The sequential addition of sugars to dolichol pyrophosphate produces dolichol-linked oligosaccharides containing fourteen sugars, including two GlcNAcs, nine mannoses and three glucoses. Once assembled, the oligosaccharide is transferred from the lipid to nascent proteins by oligosaccharyltransferases. The assembly of dolichol-linked oligosaccharides begins on the cytosolic side of the endoplasmic reticulum membrane and finishes in its lumen. RFT1 could mediate the translocation of the cytosolically oriented intermediate DolPP-GlcNAc2Man5, produced by ALG11, into the ER lumen where dolichol-linked oligosaccharides assembly continues. However, the intramembrane lipid transporter activity could not be confirmed in vitro. The chain is Man(5)GlcNAc(2)-PP-dolichol translocation protein RFT1 from Drosophila melanogaster (Fruit fly).